We begin with the raw amino-acid sequence, 326 residues long: Tagatose 1,6-diphosphate aldolase (326 aa).

This sequence belongs to the aldolase LacD family.

The enzyme catalyses D-tagatofuranose 1,6-bisphosphate = D-glyceraldehyde 3-phosphate + dihydroxyacetone phosphate. It participates in carbohydrate metabolism; D-tagatose 6-phosphate degradation; D-glyceraldehyde 3-phosphate and glycerone phosphate from D-tagatose 6-phosphate: step 2/2. In Staphylococcus aureus (strain MSSA476), this protein is Tagatose 1,6-diphosphate aldolase.